We begin with the raw amino-acid sequence, 596 residues long: Heat shock factor protein 5 (596 aa).

Residues 10–200 mediate DNA binding; that stretch reads NPNNFPAKLW…FHRSFRRDSL (191 aa). The tract at residues 541–576 is disordered; that stretch reads EMGPASKPSEDTGLATPARYREHRSNSQQGKSPDLH. At serine 572 the chain carries Phosphoserine.

It belongs to the HSF family. Homooligomer.

It localises to the nucleus. Its subcellular location is the chromosome. In terms of biological role, DNA-binding transcription factor that is essential for male fertility, spermatogenesis and meiotic prophase progression in spermatocytes under non-stress conditions. Positvely and negatively regulates gene expression to ensure progression of meiotic prophase beyond pachytene stage in spermatocytes. Plays a role in male germline meiotic sex chromosome remodeling and silencing through regulation of SMARCA4. This is Heat shock factor protein 5 (HSF5) from Homo sapiens (Human).